Consider the following 165-residue polypeptide: Putative protein FAM86C1P (165 aa).

This sequence belongs to the class I-like SAM-binding methyltransferase superfamily. EEF2KMT family. Interacts with EEF2KMT.

This Homo sapiens (Human) protein is Putative protein FAM86C1P.